The primary structure comprises 470 residues: Aspartate-semialdehyde dehydrogenase 1 (470 aa).

Residues T145 and K171 each contribute to the NAD(+) site. Residue D243 is part of the active site. G245 serves as a coordination point for NAD(+). C277 is a catalytic residue. Residue E371 coordinates NAD(+).

Belongs to the aldehyde dehydrogenase family.

The catalysed reaction is L-aspartate 4-semialdehyde + NAD(+) + H2O = L-aspartate + NADH + 2 H(+). In terms of biological role, dehydrogenase involved in the degradation of canavanine, the delta-oxa-analog of arginine, allowing growth on canavanine as sole nitrogen and carbon source. Probably catalyzes the NAD(+)-dependent oxidation of L-aspartate-semialdehyde to L-aspartate. The polypeptide is Aspartate-semialdehyde dehydrogenase 1 (Pseudomonas canavaninivorans).